A 321-amino-acid chain; its full sequence is tRNA(Ile)-lysidine synthase (321 aa).

30–35 contacts ATP; it reads SGGSDS.

Belongs to the tRNA(Ile)-lysidine synthase family.

It localises to the cytoplasm. The enzyme catalyses cytidine(34) in tRNA(Ile2) + L-lysine + ATP = lysidine(34) in tRNA(Ile2) + AMP + diphosphate + H(+). Its function is as follows. Ligates lysine onto the cytidine present at position 34 of the AUA codon-specific tRNA(Ile) that contains the anticodon CAU, in an ATP-dependent manner. Cytidine is converted to lysidine, thus changing the amino acid specificity of the tRNA from methionine to isoleucine. This is tRNA(Ile)-lysidine synthase from Chlamydia muridarum (strain MoPn / Nigg).